A 320-amino-acid polypeptide reads, in one-letter code: Malate dehydrogenase (320 aa).

Residues 10 to 15 and Asp-34 each bind NAD(+); that span reads GAGMIG. Arg-83 and Arg-89 together coordinate substrate. NAD(+)-binding positions include Asn-96 and 119–121; that span reads ITN. Substrate is bound by residues Asn-121 and Arg-152. Residue His-176 is the Proton acceptor of the active site.

Belongs to the LDH/MDH superfamily. MDH type 3 family.

The catalysed reaction is (S)-malate + NAD(+) = oxaloacetate + NADH + H(+). Functionally, catalyzes the reversible oxidation of malate to oxaloacetate. The chain is Malate dehydrogenase from Caulobacter vibrioides (strain NA1000 / CB15N) (Caulobacter crescentus).